The primary structure comprises 367 residues: ELAV-like protein 3 (367 aa).

RRM domains lie at 39–117, 125–205, and 284–362; these read TNLI…YARP, ANLY…FANN, and WCIF…FKTS.

Belongs to the RRM elav family. As to quaternary structure, interacts with MAP1B light chain LC1. In terms of tissue distribution, brain specific. Expressed in the hippocampus with expression in CA1, CA3 and dentate gyrus.

RNA-binding protein that binds to AU-rich element (ARE) sequences of target mRNAs, including VEGF mRNA. May also bind poly-A tracts via RRM 3. May be involved in neuronal differentiation and maintenance. Plays a role in the stabilization of GAP43 mRNA and in spatial learning. The chain is ELAV-like protein 3 (Elavl3) from Mus musculus (Mouse).